The sequence spans 258 residues: Regulatory protein RecX (258 aa).

This sequence belongs to the RecX family.

The protein resides in the cytoplasm. In terms of biological role, modulates RecA activity. This Streptococcus pyogenes serotype M5 (strain Manfredo) protein is Regulatory protein RecX.